We begin with the raw amino-acid sequence, 267 residues long: Collectin-11 (267 aa).

The N-terminal stretch at 1-21 is a signal peptide; sequence MKRALALMGLAFLCVLRAGAA. The segment at 40–109 is disordered; it reads GDAGEKGDKG…GPNGEPGIPC (70 aa). 2 stretches are compositionally biased toward basic and acidic residues: residues 41-50 and 62-71; these read DAGEKGDKGA and EKGDVGDKGQ. The 60-residue stretch at 49–108 folds into the Collagen-like domain; that stretch reads GAPGRPGRVGPTGEKGDVGDKGQKGGVGRHGKIGPIGSKGEKGDSGDIGPPGPNGEPGIP. The stretch at 110 to 144 forms a coiled coil; sequence ECSQLRKAIGEMDNQVTQLTAELKFIKNAVAGVRE. The region spanning 145 to 261 is the C-type lectin domain; sequence TEQKMYLLVK…CHLTMHFLCE (117 aa). Cystine bridges form between Cys-166/Cys-260 and Cys-238/Cys-252. Position 196 (Arg-196) interacts with a carbohydrate. Ca(2+) contacts are provided by Asp-203, Glu-207, Glu-228, Asn-230, Asn-231, Asp-234, Glu-236, and Asp-237. Residue Glu-236 participates in a carbohydrate binding. Residues Glu-240 and 248 to 250 each bind a carbohydrate; that span reads NDV. Residues Asn-248 and Asp-249 each contribute to the Ca(2+) site.

Belongs to the COLEC10/COLEC11 family. As to quaternary structure, homotrimer; disulfide-linked. Interacts with MASP1; probably triggers the lectin pathway of complement.

It localises to the secreted. Its function is as follows. Lectin that plays a role in innate immunity, apoptosis and embryogenesis. Calcium-dependent lectin that binds self and non-self glycoproteins presenting high mannose oligosaccharides with at least one terminal alpha-1,2-linked mannose epitope. Primarily recognizes the terminal disaccharide of the glycan. Also recognizes a subset of fucosylated glycans and lipopolysaccharides. Plays a role in innate immunity through its ability to bind non-self sugars presented by microorganisms and to activate the complement through the recruitment of MAPS1. Also plays a role in apoptosis through its ability to bind in a calcium-independent manner the DNA present at the surface of apoptotic cells and to activate the complement in response to this binding. Finally, plays a role in development, probably serving as a guidance cue during the migration of neural crest cells and other cell types during embryogenesis. The polypeptide is Collectin-11 (COLEC11) (Bos taurus (Bovine)).